We begin with the raw amino-acid sequence, 379 residues long: Lipid-A-disaccharide synthase (379 aa).

This sequence belongs to the LpxB family.

The enzyme catalyses a lipid X + a UDP-2-N,3-O-bis[(3R)-3-hydroxyacyl]-alpha-D-glucosamine = a lipid A disaccharide + UDP + H(+). The protein operates within bacterial outer membrane biogenesis; LPS lipid A biosynthesis. Its function is as follows. Condensation of UDP-2,3-diacylglucosamine and 2,3-diacylglucosamine-1-phosphate to form lipid A disaccharide, a precursor of lipid A, a phosphorylated glycolipid that anchors the lipopolysaccharide to the outer membrane of the cell. This chain is Lipid-A-disaccharide synthase, found in Aeromonas hydrophila subsp. hydrophila (strain ATCC 7966 / DSM 30187 / BCRC 13018 / CCUG 14551 / JCM 1027 / KCTC 2358 / NCIMB 9240 / NCTC 8049).